Reading from the N-terminus, the 156-residue chain is Small ribosomal subunit protein uS7 (156 aa).

Belongs to the universal ribosomal protein uS7 family. Part of the 30S ribosomal subunit. Contacts proteins S9 and S11.

Functionally, one of the primary rRNA binding proteins, it binds directly to 16S rRNA where it nucleates assembly of the head domain of the 30S subunit. Is located at the subunit interface close to the decoding center, probably blocks exit of the E-site tRNA. The chain is Small ribosomal subunit protein uS7 from Prochlorococcus marinus (strain MIT 9301).